A 127-amino-acid chain; its full sequence is Evasin P467 (127 aa).

The first 21 residues, methionine 1 to glycine 21, serve as a signal peptide directing secretion. 4 cysteine pairs are disulfide-bonded: cysteine 42–cysteine 63, cysteine 59–cysteine 100, cysteine 76–cysteine 105, and cysteine 95–cysteine 114. Residues asparagine 49 and asparagine 94 are each glycosylated (N-linked (GlcNAc...) asparagine).

It localises to the secreted. Its function is as follows. Salivary chemokine-binding protein which binds to host chemokines CCL1, CCL2, CCL3 and CCL5. The polypeptide is Evasin P467 (Rhipicephalus pulchellus (Yellow backed tick)).